Reading from the N-terminus, the 343-residue chain is Probable potassium channel protein 2 (343 aa).

Topologically, residues Met-1–Leu-7 are cytoplasmic. Residues Val-8 to Ile-28 traverse the membrane as a helical segment. The Extracellular portion of the chain corresponds to Glu-29–Thr-61. The short motif at Thr-46 to Asp-51 is the Selectivity filter element. Residues Leu-62–Ala-82 traverse the membrane as a helical segment. Topologically, residues Glu-83–Leu-343 are cytoplasmic. The RCK N-terminal domain maps to Lys-107–Ser-227. In terms of domain architecture, RCK C-terminal spans Ile-253–Lys-338.

The protein resides in the cell membrane. In terms of biological role, probable potassium channel protein. The polypeptide is Probable potassium channel protein 2 (Methanocaldococcus jannaschii (strain ATCC 43067 / DSM 2661 / JAL-1 / JCM 10045 / NBRC 100440) (Methanococcus jannaschii)).